Reading from the N-terminus, the 625-residue chain is Baeyer-Villiger monooxygenase ATR8 (625 aa).

FAD-binding positions include D112, T120 to W123, D132, and Y138. Q130–D132 is an NADP(+) binding site. NADP(+) contacts are provided by residues T266–Q272, R289–T290, and K405–R406.

Belongs to the FAD-binding monooxygenase family. Requires FAD as cofactor.

It participates in mycotoxin biosynthesis. In terms of biological role, baeyer-Villiger monooxygenase; part of the core atranone cluster (CAC) which products are predicted to catalyze most or all steps of mycotoxin atranone synthesis, starting from geranylgeranyl pyrophosphate (GGPP). The initial cyclization of GGPP to dolabellane is probably performed by the terpene cyclase ATR13. The Baeyer-Villiger oxidation near the end of the atranone synthesis, which converts atranones D and E to atranones F and G is predicted to be catalyzed by the monooxygenase ATR8. Of the CAC's other predicted gene products, the reducing PKS ATR6 might synthesize a polyketide chain. This polyketide is probably transferred onto the atranone backbone by the polyketide transferase ATR5. Other predicted CAC products include 4 oxygenases (ATR2, ATR3, ATR4, and ATR14), 3 short-chain reductases (ATR7, ATR9, and ATR10), and a methyltransferase (ATR12). These may all be involved in the various steps of atranone biosynthesis, although their specific roles must await experimental determination. This is Baeyer-Villiger monooxygenase ATR8 from Stachybotrys chlorohalonatus (strain IBT 40285).